Here is a 719-residue protein sequence, read N- to C-terminus: Penicillin-binding protein 1A (719 aa).

The transglycosylase stretch occupies residues 62-223; sequence LIADLGSERR…NQYDPYSHPE (162 aa). E91 (proton donor; for transglycosylase activity) is an active-site residue. A transpeptidase region spans residues 297 to 611; the sequence is DVYTNVDQEA…RLTPLVGNGL (315 aa). The active-site Acyl-ester intermediate; for transpeptidase activity is S370. The tract at residues 652–719 is disordered; the sequence is ARSTWSSPAP…QNQNPQPAQP (68 aa). The segment covering 654–719 has biased composition (low complexity); that stretch reads STWSSPAPQQ…QNQNPQPAQP (66 aa).

It in the N-terminal section; belongs to the glycosyltransferase 51 family. In the C-terminal section; belongs to the transpeptidase family. Interacts with MreC in the elongasome.

The protein resides in the secreted. It catalyses the reaction [GlcNAc-(1-&gt;4)-Mur2Ac(oyl-L-Ala-gamma-D-Glu-L-Lys-D-Ala-D-Ala)](n)-di-trans,octa-cis-undecaprenyl diphosphate + beta-D-GlcNAc-(1-&gt;4)-Mur2Ac(oyl-L-Ala-gamma-D-Glu-L-Lys-D-Ala-D-Ala)-di-trans,octa-cis-undecaprenyl diphosphate = [GlcNAc-(1-&gt;4)-Mur2Ac(oyl-L-Ala-gamma-D-Glu-L-Lys-D-Ala-D-Ala)](n+1)-di-trans,octa-cis-undecaprenyl diphosphate + di-trans,octa-cis-undecaprenyl diphosphate + H(+). The catalysed reaction is Preferential cleavage: (Ac)2-L-Lys-D-Ala-|-D-Ala. Also transpeptidation of peptidyl-alanyl moieties that are N-acyl substituents of D-alanine.. The protein operates within cell wall biogenesis; peptidoglycan biosynthesis. Cell wall formation. This is Penicillin-binding protein 1A (pbpA) from Streptococcus pneumoniae (strain ATCC BAA-255 / R6).